The following is a 308-amino-acid chain: E3 ubiquitin-protein ligase RING2 (308 aa).

At Ser-2 the chain carries N-acetylserine. Positions Ser-2–Cys-179 are interaction with HIP2. Ser-41 is modified (phosphoserine). The RING-type zinc finger occupies Cys-51 to Arg-91. Positions Lys-93 to Arg-98 are interaction with nucleosomes via an acidic patch on histone H2A and histone H2B. Lys-112 is covalently cross-linked (Glycyl lysine isopeptide (Lys-Gly) (interchain with G-Cter in ubiquitin)). Ser-143 and Ser-168 each carry phosphoserine. Residues Gln-157–Glu-206 are disordered. The segment covering Ser-176–Gly-191 has biased composition (polar residues). Residue Lys-249 forms a Glycyl lysine isopeptide (Lys-Gly) (interchain with G-Cter in SUMO2) linkage.

Component of chromatin-associated Polycomb (PcG) complexes. Component of a number of PRC1-like complexes; these complexes contain either the polycomb group ring finger protein PCGF1, or PCGF2, or PCGF3, or BMI1, or PCGF5, or PCGF6. Distinct PRC1-like complexes are composed of a RING1 subunit (RING1B or RING1A), one of the six PCGF proteins (PCGF1, PCGF2, PCGF3, BMI1, PCGF5 or PCGF6), one PHC protein (PHC1, PHC2 or PHC3) and one of the CBX proteins (CBX2, CBX4, CBX6, CBX7 or CBX8). Part of a complex that contains RNF2, UB2D3 and BMI1; within that complex RNF2 and BMI1 form a tight heterodimer, where UB2D3 interacts only with RNF2. The complex composed of RNF2, UB2D3 and BMI1 binds nucleosomes, and has activity only with nucleosomal histone H2A. Part of a complex that contains PCGF5, RNF2 and UBE2D3. Part of a complex that contains AUTS2, PCGF5, RNF2, CSNK2B and RYBP. Interacts with CBX6 and CBX8. Interacts with PHC1, PCGF2, RYBP, CBX7, CBX4, CBX2, RNF1/RING1, BMI1 and PHC2. Interaction with RYBP and CBX7 is mutually exclusive; both compete for the same binding site on RNF2. Component of repressive BCOR complex containing a Polycomb group subcomplex at least composed of RYBP, PCGF1, BCOR and RING1. Interacts with CBX2 and PHC1. Interacts with CHTOP. Interacts with AURKB. Part of the E2F6.com-1 complex in G0 phase composed of E2F6, MGA, MAX, TFDP1, CBX3, BAT8, EUHMTASE1, RNF1/RING1, RNF2/RING2, MBLR, L3MBTL2 and YAF2. Component of some MLL1/MLL complex, at least composed of the core components KMT2A/MLL1, ASH2L, HCFC1/HCF1, WDR5 and RBBP5, as well as the facultative components BACC1, CHD8, E2F6, HSP70, INO80C, KANSL1, LAS1L, MAX, MCRS1, MGA, MYST1/MOF, PELP1, PHF20, PRP31, RING2, RUVB1/TIP49A, RUVB2/TIP49B, SENP3, TAF1, TAF4, TAF6, TAF7, TAF9 and TEX10. Interacts with RYBP, HIP2 and TFCP2. Interacts with NUPR1. Interacts with SAMD7 in a PHC2-dependent manner. In terms of processing, monoubiquitinated, by auto-ubiquitination. Polyubiquitinated in the presence of UBE2D3 (in vitro).

The protein resides in the nucleus. Its subcellular location is the cytoplasm. The protein localises to the chromosome. The enzyme catalyses S-ubiquitinyl-[E2 ubiquitin-conjugating enzyme]-L-cysteine + [acceptor protein]-L-lysine = [E2 ubiquitin-conjugating enzyme]-L-cysteine + N(6)-ubiquitinyl-[acceptor protein]-L-lysine.. It functions in the pathway protein modification; protein ubiquitination. E3 ubiquitin-protein ligase that mediates monoubiquitination of 'Lys-119' of histone H2A (H2AK119Ub), thereby playing a central role in histone code and gene regulation. H2AK119Ub gives a specific tag for epigenetic transcriptional repression and participates in X chromosome inactivation of female mammals. May be involved in the initiation of both imprinted and random X inactivation. Essential component of a Polycomb group (PcG) multiprotein PRC1-like complex, a complex class required to maintain the transcriptionally repressive state of many genes, including Hox genes, throughout development. PcG PRC1 complex acts via chromatin remodeling and modification of histones, rendering chromatin heritably changed in its expressibility. E3 ubiquitin-protein ligase activity is enhanced by BMI1/PCGF4. Acts as the main E3 ubiquitin ligase on histone H2A of the PRC1 complex, while RING1 may rather act as a modulator of RNF2/RING2 activity. Plays a role in the transcriptional repression of genes that are required for pluripotency in embryonic stem cells, thereby contributing to differentiation of the ectodermal and endodermal germ layers. Association with the chromosomal DNA is cell-cycle dependent. In resting B- and T-lymphocytes, interaction with AURKB leads to block its activity, thereby maintaining transcription in resting lymphocytes. Also acts as a negative regulator of autophagy by mediating ubiquitination of AMBRA1, leading to its subsequent degradation. This chain is E3 ubiquitin-protein ligase RING2 (Rnf2), found in Rattus norvegicus (Rat).